The chain runs to 198 residues: Cell division protein SepF (198 aa).

The disordered stretch occupies residues E170–Q198. The segment covering A179 to A188 has biased composition (low complexity).

This sequence belongs to the SepF family. Homodimer. Interacts with FtsZ.

The protein localises to the cytoplasm. Functionally, cell division protein that is part of the divisome complex and is recruited early to the Z-ring. Probably stimulates Z-ring formation, perhaps through the cross-linking of FtsZ protofilaments. Its function overlaps with FtsA. The sequence is that of Cell division protein SepF from Trichormus variabilis (strain ATCC 29413 / PCC 7937) (Anabaena variabilis).